A 430-amino-acid polypeptide reads, in one-letter code: tRNA(Ile)-lysidine synthase (430 aa).

27-32 (SGGSDS) is a binding site for ATP.

Belongs to the tRNA(Ile)-lysidine synthase family.

It localises to the cytoplasm. It carries out the reaction cytidine(34) in tRNA(Ile2) + L-lysine + ATP = lysidine(34) in tRNA(Ile2) + AMP + diphosphate + H(+). Functionally, ligates lysine onto the cytidine present at position 34 of the AUA codon-specific tRNA(Ile) that contains the anticodon CAU, in an ATP-dependent manner. Cytidine is converted to lysidine, thus changing the amino acid specificity of the tRNA from methionine to isoleucine. This Rickettsia bellii (strain OSU 85-389) protein is tRNA(Ile)-lysidine synthase.